A 212-amino-acid chain; its full sequence is Ras-related protein Rab-15 (212 aa).

Positions 17, 18, 19, 20, 21, 22, 23, 35, 39, and 40 each coordinate GTP. Residue T22 coordinates Mg(2+). 2 consecutive short sequence motifs (switch) follow at residues 31 to 45 and 63 to 80; these read NEFH…GVDF and DTAG…YYRR. Mg(2+) contacts are provided by T40 and D63. GTP is bound by residues G66, N121, K122, D124, S151, and A152. A disordered region spans residues 193–212; the sequence is LEEEEGKPEGPANSSKTCWC. 2 S-geranylgeranyl cysteine lipidation sites follow: C210 and C212. Residue C212 is modified to Cysteine methyl ester.

It belongs to the small GTPase superfamily. Rab family. As to quaternary structure, the GTP bound form of RAB15 interacts with REP15. Interacts (GTP-bound form) with MICAL1, MICAL3, MICALCL, EHBP1 and EHBP1L1. Mg(2+) is required as a cofactor.

The protein resides in the cell membrane. It carries out the reaction GTP + H2O = GDP + phosphate + H(+). With respect to regulation, regulated by guanine nucleotide exchange factors (GEFs) which promote the exchange of bound GDP for free GTP. Regulated by GTPase activating proteins (GAPs) which increase the GTP hydrolysis activity. Inhibited by GDP dissociation inhibitors (GDIs). In terms of biological role, the small GTPases Rab are key regulators of intracellular membrane trafficking, from the formation of transport vesicles to their fusion with membranes. Rabs cycle between an inactive GDP-bound form and an active GTP-bound form that is able to recruit to membranes different sets of downstream effectors directly responsible for vesicle formation, movement, tethering and fusion. RAB15 may act in concert with RAB3A in regulating aspects of synaptic vesicle membrane flow within the nerve terminal. This Homo sapiens (Human) protein is Ras-related protein Rab-15.